Reading from the N-terminus, the 431-residue chain is tRNA(Ile)-lysidine synthase (431 aa).

25 to 30 (SGGLDS) provides a ligand contact to ATP.

It belongs to the tRNA(Ile)-lysidine synthase family.

It is found in the cytoplasm. The catalysed reaction is cytidine(34) in tRNA(Ile2) + L-lysine + ATP = lysidine(34) in tRNA(Ile2) + AMP + diphosphate + H(+). Ligates lysine onto the cytidine present at position 34 of the AUA codon-specific tRNA(Ile) that contains the anticodon CAU, in an ATP-dependent manner. Cytidine is converted to lysidine, thus changing the amino acid specificity of the tRNA from methionine to isoleucine. In Legionella pneumophila (strain Lens), this protein is tRNA(Ile)-lysidine synthase.